The chain runs to 142 residues: Nucleoside diphosphate kinase (142 aa).

Lysine 11, phenylalanine 59, arginine 87, threonine 93, arginine 104, and asparagine 114 together coordinate ATP. Residue histidine 117 is the Pros-phosphohistidine intermediate of the active site.

It belongs to the NDK family. Homotetramer. Mg(2+) serves as cofactor.

It localises to the cytoplasm. It catalyses the reaction a 2'-deoxyribonucleoside 5'-diphosphate + ATP = a 2'-deoxyribonucleoside 5'-triphosphate + ADP. It carries out the reaction a ribonucleoside 5'-diphosphate + ATP = a ribonucleoside 5'-triphosphate + ADP. In terms of biological role, major role in the synthesis of nucleoside triphosphates other than ATP. The ATP gamma phosphate is transferred to the NDP beta phosphate via a ping-pong mechanism, using a phosphorylated active-site intermediate. This is Nucleoside diphosphate kinase from Dechloromonas aromatica (strain RCB).